The following is a 398-amino-acid chain: uncharacterized protein (398 aa).

Positions 1 to 22 (MKLKFYKLPLITTAFSFVFLTA) are cleaved as a signal peptide. C23 carries N-palmitoyl cysteine lipidation. C23 is lipidated: S-diacylglycerol cysteine.

The protein localises to the cell membrane. This is an uncharacterized protein from Mycoplasma genitalium (strain ATCC 33530 / DSM 19775 / NCTC 10195 / G37) (Mycoplasmoides genitalium).